The chain runs to 295 residues: Bifunctional protein FolD (295 aa).

NADP(+) is bound by residues 172 to 174 (GRS), S197, and I238.

This sequence belongs to the tetrahydrofolate dehydrogenase/cyclohydrolase family. In terms of assembly, homodimer.

It catalyses the reaction (6R)-5,10-methylene-5,6,7,8-tetrahydrofolate + NADP(+) = (6R)-5,10-methenyltetrahydrofolate + NADPH. It carries out the reaction (6R)-5,10-methenyltetrahydrofolate + H2O = (6R)-10-formyltetrahydrofolate + H(+). The protein operates within one-carbon metabolism; tetrahydrofolate interconversion. Functionally, catalyzes the oxidation of 5,10-methylenetetrahydrofolate to 5,10-methenyltetrahydrofolate and then the hydrolysis of 5,10-methenyltetrahydrofolate to 10-formyltetrahydrofolate. The protein is Bifunctional protein FolD of Rickettsia akari (strain Hartford).